The following is a 470-amino-acid chain: Cyclic AMP receptor-like protein D (470 aa).

Over 1–16 (MSSCSSLSMDDRVKIG) the chain is Extracellular. A helical membrane pass occupies residues 17–37 (YGSIAGASLSIIGSIGTIILI). The Cytoplasmic segment spans residues 38-123 (KIRNKKQEKK…NNNQKTKVSH (86 aa)). The helical transmembrane segment at 124 to 144 (FIINLSIANLLASIFMITIKL) threads the bilayer. At 145-176 (MMIHFNDKFIKVLPSTANHSFNALISVCTIGN) the chain is on the extracellular side. A glycan (N-linked (GlcNAc...) asparagine) is linked at Asn-162. A disulfide bond links Cys-172 and Cys-287. A helical transmembrane segment spans residues 177 to 197 (GVIGFSFISTFFWTLAISMYI). Topologically, residues 198–253 (YQQFLSSSTINSNNNNNNINNINNNNNNNINNINNSKNNNSINNFNNSNKSNKIIK) are cytoplasmic. A helical membrane pass occupies residues 254–274 (MLFYFVCWVIPFVLGSILVSG). At 275 to 295 (SRLIELNSDLPWCSIDSNIQL) the chain is on the extracellular side. Residues 296–316 (ISFYFPLIICLLATTFFTILI) form a helical membrane-spanning segment. At 317-342 (KYKFSNDKLACSSSSLINLQSKIIQR) the chain is on the cytoplasmic side. A helical membrane pass occupies residues 343 to 363 (LILFLIVILVCWVPSLISFFI). At 364–372 (SFFSKNCKQ) the chain is on the extracellular side. Residues 373–393 (FLWLEIISSTIQSCQGILNFL) form a helical membrane-spanning segment. At 394-470 (SYLSIFKKLK…DFDNNQIQEK (77 aa)) the chain is on the cytoplasmic side.

This sequence belongs to the G-protein coupled receptor 5 family.

It is found in the membrane. Receptor for cAMP. In Dictyostelium discoideum (Social amoeba), this protein is Cyclic AMP receptor-like protein D (crlD).